The primary structure comprises 286 residues: tRNA (guanine-N(7)-)-methyltransferase (286 aa).

Phosphoserine is present on residues serine 7 and serine 59. S-adenosyl-L-methionine is bound by residues glycine 103, 126–127, 161–162, and cysteine 181; these read EI and NA. Aspartate 184 is a catalytic residue. 259-261 contacts S-adenosyl-L-methionine; sequence TEE.

This sequence belongs to the class I-like SAM-binding methyltransferase superfamily. TrmB family. In terms of assembly, forms a complex with TRM82.

The protein localises to the nucleus. The enzyme catalyses guanosine(46) in tRNA + S-adenosyl-L-methionine = N(7)-methylguanosine(46) in tRNA + S-adenosyl-L-homocysteine. It functions in the pathway tRNA modification; N(7)-methylguanine-tRNA biosynthesis. Functionally, methyltransferase that catalyzes the formation of N(7)-methylguanine at position 46 (m7G46) in tRNA, a modification required to maintain stability of tRNAs; its absence resulting in tRNA decay. Both the D-stem and T-stem structures of tRNAs are required for efficient methyltransferase activity. The chain is tRNA (guanine-N(7)-)-methyltransferase from Saccharomyces cerevisiae (strain RM11-1a) (Baker's yeast).